A 1161-amino-acid chain; its full sequence is PAN2-PAN3 deadenylation complex catalytic subunit pan2 (1161 aa).

2 WD repeats span residues 20 to 59 (GLPT…RYTS) and 276 to 315 (ANVS…HFNE). Residues 316–452 (MSKEVEFADV…GAKLNGEAED (137 aa)) form a linker region. Positions 453 to 822 (DPLLKYSNVE…SPCILAYQAK (370 aa)) constitute a USP domain. Residues 871–1049 (VALDTEFVDL…IEDARMALRL (179 aa)) form the Exonuclease domain. A divalent metal cation-binding residues include D874, E876, D983, and D1042. A WD 4 repeat occupies 1009–1060 (NRRLSLRYLAWAVFKEYIQEEPADNNQGHDSIEDARMALRLWKKFQEYEDAG). The disordered stretch occupies residues 1092–1161 (RPGTAVTMQN…GDFFGGSPLK (70 aa)). Positions 1097-1110 (VTMQNSSGRNTPST) are enriched in polar residues. The span at 1116–1129 (AATATATTSAPATP) shows a compositional bias: low complexity. Positions 1145-1155 (TFGGPGAGDFF) are enriched in gly residues.

This sequence belongs to the peptidase C19 family. PAN2 subfamily. In terms of assembly, forms a heterotrimer with an asymmetric homodimer of the regulatory subunit pan3 to form the poly(A)-nuclease (PAN) deadenylation complex. A divalent metal cation is required as a cofactor.

It is found in the cytoplasm. The catalysed reaction is Exonucleolytic cleavage of poly(A) to 5'-AMP.. Its activity is regulated as follows. Positively regulated by the regulatory subunit pan3. Functionally, catalytic subunit of the poly(A)-nuclease (PAN) deadenylation complex, one of two cytoplasmic mRNA deadenylases involved in mRNA turnover. PAN specifically shortens poly(A) tails of RNA and the activity is stimulated by poly(A)-binding protein pab1. PAN deadenylation is followed by rapid degradation of the shortened mRNA tails by the CCR4-NOT complex. Deadenylated mRNAs are then degraded by two alternative mechanisms, namely exosome-mediated 3'-5' exonucleolytic degradation, or deadenylation-dependent mRNA decaping and subsequent 5'-3' exonucleolytic degradation by xrn1. May also be involved in post-transcriptional maturation of mRNA poly(A) tails. The chain is PAN2-PAN3 deadenylation complex catalytic subunit pan2 from Neosartorya fischeri (strain ATCC 1020 / DSM 3700 / CBS 544.65 / FGSC A1164 / JCM 1740 / NRRL 181 / WB 181) (Aspergillus fischerianus).